Here is a 315-residue protein sequence, read N- to C-terminus: Porphobilinogen deaminase (315 aa).

Cys234 carries the post-translational modification S-(dipyrrolylmethanemethyl)cysteine.

This sequence belongs to the HMBS family. Monomer. Dipyrromethane is required as a cofactor.

It carries out the reaction 4 porphobilinogen + H2O = hydroxymethylbilane + 4 NH4(+). It functions in the pathway porphyrin-containing compound metabolism; protoporphyrin-IX biosynthesis; coproporphyrinogen-III from 5-aminolevulinate: step 2/4. Functionally, tetrapolymerization of the monopyrrole PBG into the hydroxymethylbilane pre-uroporphyrinogen in several discrete steps. The protein is Porphobilinogen deaminase of Mycolicibacterium paratuberculosis (strain ATCC BAA-968 / K-10) (Mycobacterium paratuberculosis).